The following is a 541-amino-acid chain: Chaperonin GroEL 2 (541 aa).

ATP is bound by residues 29-32 (TLGP), 86-90 (DGTTT), Gly413, 476-478 (NAA), and Asp492.

The protein belongs to the chaperonin (HSP60) family. Forms a cylinder of 14 subunits composed of two heptameric rings stacked back-to-back. Interacts with the co-chaperonin GroES.

Its subcellular location is the secreted. It localises to the capsule. The protein resides in the cell surface. The protein localises to the cell wall. The enzyme catalyses ATP + H2O + a folded polypeptide = ADP + phosphate + an unfolded polypeptide.. In terms of biological role, together with its co-chaperonin GroES, plays an essential role in assisting protein folding. The GroEL-GroES system forms a nano-cage that allows encapsulation of the non-native substrate proteins and provides a physical environment optimized to promote and accelerate protein folding. The protein is Chaperonin GroEL 2 of Mycolicibacterium vanbaalenii (strain DSM 7251 / JCM 13017 / BCRC 16820 / KCTC 9966 / NRRL B-24157 / PYR-1) (Mycobacterium vanbaalenii).